A 447-amino-acid polypeptide reads, in one-letter code: Argininosuccinate synthase (447 aa).

Residues 17 to 25 and Ala43 each bind ATP; that span reads AFSGGLDTS. Tyr99 contacts L-citrulline. Gly129 and Thr131 together coordinate ATP. L-aspartate-binding residues include Thr131, Asn135, and Asp136. Asn135 lines the L-citrulline pocket. Asp136 is a binding site for ATP. L-citrulline contacts are provided by Arg139 and Ser192. Asp194 contributes to the ATP binding site. The L-citrulline site is built by Thr201, Glu203, and Glu280.

This sequence belongs to the argininosuccinate synthase family. Type 2 subfamily. Homotetramer.

Its subcellular location is the cytoplasm. The catalysed reaction is L-citrulline + L-aspartate + ATP = 2-(N(omega)-L-arginino)succinate + AMP + diphosphate + H(+). Its pathway is amino-acid biosynthesis; L-arginine biosynthesis; L-arginine from L-ornithine and carbamoyl phosphate: step 2/3. The chain is Argininosuccinate synthase from Salmonella heidelberg (strain SL476).